A 253-amino-acid polypeptide reads, in one-letter code: Claudin domain-containing protein 1 (253 aa).

The helical transmembrane segment at 5–25 (FATAFVIACVLSLISTIYMAA) threads the bilayer. N-linked (GlcNAc...) asparagine glycans are attached at residues Asn-42 and Asn-72. 3 helical membrane-spanning segments follow: residues 141–161 (FLLP…GLCA), 175–195 (ILHL…VAGI), and 216–236 (FCLA…FIWA).

It belongs to the PMP-22/EMP/MP20 family. In the brain, highly expressed in endothelial cells of the cerebellum compared to other regions (at protein level).

The protein localises to the cell junction. It is found in the tight junction. The protein resides in the cell membrane. Plays a role in negatively regulating the permeability of cells to small molecules. The polypeptide is Claudin domain-containing protein 1 (Cldnd1) (Mus musculus (Mouse)).